A 202-amino-acid polypeptide reads, in one-letter code: Outer-membrane lipoprotein carrier protein (202 aa).

The first 18 residues, 1 to 18 (MNKLFLILLLIFSHEVFS), serve as a signal peptide directing secretion.

It belongs to the LolA family. In terms of assembly, monomer.

It localises to the periplasm. Its function is as follows. Participates in the translocation of lipoproteins from the inner membrane to the outer membrane. Only forms a complex with a lipoprotein if the residue after the N-terminal Cys is not an aspartate (The Asp acts as a targeting signal to indicate that the lipoprotein should stay in the inner membrane). The chain is Outer-membrane lipoprotein carrier protein from Legionella pneumophila (strain Corby).